An 83-amino-acid chain; its full sequence is Beta-toxin Ct25 (83 aa).

A signal peptide spans 1 to 18 (MKVLILIIASVLLIGVEC). Positions 19 to 81 (KDGYPKNSEG…VWDSATNKCG (63 aa)) constitute an LCN-type CS-alpha/beta domain. Disulfide bonds link C29–C80, C33–C54, C40–C61, and C44–C63. The residue at position 81 (G81) is a Glycine amide.

Belongs to the long (4 C-C) scorpion toxin superfamily. Sodium channel inhibitor family. Beta subfamily. In terms of tissue distribution, expressed by the venom gland.

The protein resides in the secreted. Beta toxins bind voltage-independently at site-4 of sodium channels (Nav) and shift the voltage of activation toward more negative potentials thereby affecting sodium channel activation and promoting spontaneous and repetitive firing. The polypeptide is Beta-toxin Ct25 (Centruroides tecomanus (Scorpion)).